The following is a 152-amino-acid chain: Large ribosomal subunit protein eL29 (152 aa).

Positions 1–26 (MAKSKNHTTHNQSRKWHRNGIKKPRS) are enriched in basic residues. Residues 1 to 32 (MAKSKNHTTHNQSRKWHRNGIKKPRSQRYESL) are disordered. K5 carries the N6-methyllysine modification. A Phosphoserine modification is found at S31. K33 is subject to N6-acetyllysine. A disordered region spans residues 119–152 (CRPKSQAKASTKAKPPAAAAPAAKGAQAPTKAPE). A compositionally biased stretch (low complexity) spans 121 to 152 (PKSQAKASTKAKPPAAAAPAAKGAQAPTKAPE).

Belongs to the eukaryotic ribosomal protein eL29 family. In terms of assembly, component of the large ribosomal subunit.

Its subcellular location is the cytoplasm. In terms of biological role, component of the large ribosomal subunit. The ribosome is a large ribonucleoprotein complex responsible for the synthesis of proteins in the cell. This is Large ribosomal subunit protein eL29 (RPL29) from Bos taurus (Bovine).